Here is a 150-residue protein sequence, read N- to C-terminus: Small heat shock protein IbpB (150 aa).

A sHSP domain is found at 26 to 137 (SQEPIDFPPY…QPQRIAIGGG (112 aa)).

Belongs to the small heat shock protein (HSP20) family. As to quaternary structure, homodimer. Forms homomultimers of about 100-150 subunits at optimal growth temperatures. Conformation changes to oligomers at high temperatures or high ionic concentrations. The decrease in size of the multimers is accompanied by an increase in chaperone activity.

It localises to the cytoplasm. In terms of biological role, associates with aggregated proteins, together with IbpA, to stabilize and protect them from irreversible denaturation and extensive proteolysis during heat shock and oxidative stress. Aggregated proteins bound to the IbpAB complex are more efficiently refolded and reactivated by the ATP-dependent chaperone systems ClpB and DnaK/DnaJ/GrpE. Its activity is ATP-independent. The chain is Small heat shock protein IbpB from Pectobacterium atrosepticum (strain SCRI 1043 / ATCC BAA-672) (Erwinia carotovora subsp. atroseptica).